A 386-amino-acid polypeptide reads, in one-letter code: S-adenosylmethionine synthase (386 aa).

H17 is a binding site for ATP. D19 contributes to the Mg(2+) binding site. E45 is a binding site for K(+). Positions 58 and 101 each coordinate L-methionine. Residues Q101 to E111 are flexible loop. ATP contacts are provided by residues D168–K170, D242, R248–K249, A265, and K269. An L-methionine-binding site is contributed by D242. K273 contributes to the L-methionine binding site.

The protein belongs to the AdoMet synthase family. Homotetramer; dimer of dimers. Mg(2+) serves as cofactor. K(+) is required as a cofactor.

The protein localises to the cytoplasm. The catalysed reaction is L-methionine + ATP + H2O = S-adenosyl-L-methionine + phosphate + diphosphate. It participates in amino-acid biosynthesis; S-adenosyl-L-methionine biosynthesis; S-adenosyl-L-methionine from L-methionine: step 1/1. In terms of biological role, catalyzes the formation of S-adenosylmethionine (AdoMet) from methionine and ATP. The overall synthetic reaction is composed of two sequential steps, AdoMet formation and the subsequent tripolyphosphate hydrolysis which occurs prior to release of AdoMet from the enzyme. This chain is S-adenosylmethionine synthase, found in Leptospira borgpetersenii serovar Hardjo-bovis (strain JB197).